We begin with the raw amino-acid sequence, 294 residues long: Diaminopimelate epimerase (294 aa).

Positions 15, 47, and 67 each coordinate substrate. C76 functions as the Proton donor in the catalytic mechanism. Substrate is bound by residues 77 to 78 (GN), N163, N197, and 215 to 216 (ER). Residue C224 is the Proton acceptor of the active site. 225-226 (GS) is a substrate binding site.

It belongs to the diaminopimelate epimerase family. In terms of assembly, homodimer.

It localises to the cytoplasm. The enzyme catalyses (2S,6S)-2,6-diaminopimelate = meso-2,6-diaminopimelate. The protein operates within amino-acid biosynthesis; L-lysine biosynthesis via DAP pathway; DL-2,6-diaminopimelate from LL-2,6-diaminopimelate: step 1/1. In terms of biological role, catalyzes the stereoinversion of LL-2,6-diaminopimelate (L,L-DAP) to meso-diaminopimelate (meso-DAP), a precursor of L-lysine and an essential component of the bacterial peptidoglycan. In Mesorhizobium japonicum (strain LMG 29417 / CECT 9101 / MAFF 303099) (Mesorhizobium loti (strain MAFF 303099)), this protein is Diaminopimelate epimerase.